A 1333-amino-acid polypeptide reads, in one-letter code: DNA-directed RNA polymerase subunit beta' (1333 aa).

Residues Cys-60, Cys-62, Cys-75, and Cys-78 each contribute to the Zn(2+) site. Residues Asp-535, Asp-537, and Asp-539 each coordinate Mg(2+). Zn(2+) is bound by residues Cys-901, Cys-983, Cys-990, and Cys-993.

Belongs to the RNA polymerase beta' chain family. In terms of assembly, the RNAP catalytic core consists of 2 alpha, 1 beta, 1 beta' and 1 omega subunit. When a sigma factor is associated with the core the holoenzyme is formed, which can initiate transcription. Mg(2+) is required as a cofactor. The cofactor is Zn(2+).

The enzyme catalyses RNA(n) + a ribonucleoside 5'-triphosphate = RNA(n+1) + diphosphate. Its function is as follows. DNA-dependent RNA polymerase catalyzes the transcription of DNA into RNA using the four ribonucleoside triphosphates as substrates. The chain is DNA-directed RNA polymerase subunit beta' from Corynebacterium efficiens (strain DSM 44549 / YS-314 / AJ 12310 / JCM 11189 / NBRC 100395).